A 291-amino-acid chain; its full sequence is Protease HtpX homolog (291 aa).

2 consecutive transmembrane segments (helical) span residues 4-24 (VVLF…SARV) and 38-58 (MGML…ISLL). His-144 lines the Zn(2+) pocket. The active site involves Glu-145. A Zn(2+)-binding site is contributed by His-148. Helical transmembrane passes span 159 to 179 (LIQG…AYAI) and 199 to 219 (ISSI…VMYF). Residue Glu-224 participates in Zn(2+) binding.

It belongs to the peptidase M48B family. The cofactor is Zn(2+).

It localises to the cell inner membrane. The sequence is that of Protease HtpX homolog from Chlorobium phaeobacteroides (strain DSM 266 / SMG 266 / 2430).